Here is a 209-residue protein sequence, read N- to C-terminus: NAD(P)H-quinone oxidoreductase subunit I (209 aa).

4Fe-4S ferredoxin-type domains lie at 55-84 (GRIHFEYDKCIACEVCVRVCPINLPVVDWE) and 95-124 (KHYSIDFGVCIFCGNCVEYCPSNCLSMTEE). Positions 64, 67, 70, 74, 104, 107, 110, and 114 each coordinate [4Fe-4S] cluster.

This sequence belongs to the complex I 23 kDa subunit family. In terms of assembly, NDH-1 is composed of at least 11 different subunits. The cofactor is [4Fe-4S] cluster.

The protein resides in the cellular thylakoid membrane. It catalyses the reaction a plastoquinone + NADH + (n+1) H(+)(in) = a plastoquinol + NAD(+) + n H(+)(out). The catalysed reaction is a plastoquinone + NADPH + (n+1) H(+)(in) = a plastoquinol + NADP(+) + n H(+)(out). Its function is as follows. NDH-1 shuttles electrons from an unknown electron donor, via FMN and iron-sulfur (Fe-S) centers, to quinones in the respiratory and/or the photosynthetic chain. The immediate electron acceptor for the enzyme in this species is believed to be plastoquinone. Couples the redox reaction to proton translocation, and thus conserves the redox energy in a proton gradient. The protein is NAD(P)H-quinone oxidoreductase subunit I of Trichodesmium erythraeum (strain IMS101).